Here is a 299-residue protein sequence, read N- to C-terminus: Elongation factor Ts, mitochondrial (299 aa).

The transit peptide at M1 to V18 directs the protein to the mitochondrion.

It belongs to the EF-Ts family.

The protein resides in the mitochondrion. In terms of biological role, associates with the EF-Tu.GDP complex and induces the exchange of GDP to GTP. It remains bound to the aminoacyl-tRNA.EF-Tu.GTP complex up to the GTP hydrolysis stage on the ribosome. This is Elongation factor Ts, mitochondrial (tsf1) from Schizosaccharomyces pombe (strain 972 / ATCC 24843) (Fission yeast).